Consider the following 237-residue polypeptide: Orotidine 5'-phosphate decarboxylase (237 aa).

Substrate-binding positions include Asp-11, Lys-34, 61–70 (DLKLHDIPNT), Thr-124, Arg-186, Gln-195, Gly-215, and Arg-216. Lys-63 serves as the catalytic Proton donor.

This sequence belongs to the OMP decarboxylase family. Type 1 subfamily. In terms of assembly, homodimer.

The enzyme catalyses orotidine 5'-phosphate + H(+) = UMP + CO2. It participates in pyrimidine metabolism; UMP biosynthesis via de novo pathway; UMP from orotate: step 2/2. In terms of biological role, catalyzes the decarboxylation of orotidine 5'-monophosphate (OMP) to uridine 5'-monophosphate (UMP). This Lactococcus lactis subsp. lactis (strain IL1403) (Streptococcus lactis) protein is Orotidine 5'-phosphate decarboxylase.